Here is a 60-residue protein sequence, read N- to C-terminus: Large ribosomal subunit protein uL30 (60 aa).

Belongs to the universal ribosomal protein uL30 family. As to quaternary structure, part of the 50S ribosomal subunit.

The sequence is that of Large ribosomal subunit protein uL30 from Polaromonas sp. (strain JS666 / ATCC BAA-500).